The following is a 376-amino-acid chain: Sterol 24-C-methyltransferase (376 aa).

This sequence belongs to the class I-like SAM-binding methyltransferase superfamily. Erg6/SMT family.

The catalysed reaction is zymosterol + S-adenosyl-L-methionine = fecosterol + S-adenosyl-L-homocysteine + H(+). It participates in steroid metabolism; ergosterol biosynthesis; ergosterol from zymosterol: step 1/5. Substrate analogs 25-azalanosterol and 24(R,S),25-epiminolanosterol act as inhibitors. Its function is as follows. Sterol 24-C-methyltransferase; part of the third module of ergosterol biosynthesis pathway that includes the late steps of the pathway. ERG6 catalyzes the methyl transfer from S-adenosyl-methionine to the C-24 of zymosterol to form fecosterol. The third module or late pathway involves the ergosterol synthesis itself through consecutive reactions that mainly occur in the endoplasmic reticulum (ER) membrane. Firstly, the squalene synthase ERG9 catalyzes the condensation of 2 farnesyl pyrophosphate moieties to form squalene, which is the precursor of all steroids. Squalene synthase is crucial for balancing the incorporation of farnesyl diphosphate (FPP) into sterol and nonsterol isoprene synthesis. Secondly, the squalene epoxidase ERG1 catalyzes the stereospecific oxidation of squalene to (S)-2,3-epoxysqualene, which is considered to be a rate-limiting enzyme in steroid biosynthesis. Then, the lanosterol synthase ERG7 catalyzes the cyclization of (S)-2,3 oxidosqualene to lanosterol, a reaction that forms the sterol core. In the next steps, lanosterol is transformed to zymosterol through a complex process involving various demethylation, reduction and desaturation reactions. The lanosterol 14-alpha-demethylase ERG11 (also known as CYP51) catalyzes C14-demethylation of lanosterol to produce 4,4'-dimethyl cholesta-8,14,24-triene-3-beta-ol, which is critical for ergosterol biosynthesis. The C-14 reductase ERG24 reduces the C14=C15 double bond of 4,4-dimethyl-cholesta-8,14,24-trienol to produce 4,4-dimethyl-cholesta-8,24-dienol. 4,4-dimethyl-cholesta-8,24-dienol is substrate of the C-4 demethylation complex ERG25-ERG26-ERG27 in which ERG25 catalyzes the three-step monooxygenation required for the demethylation of 4,4-dimethyl and 4alpha-methylsterols, ERG26 catalyzes the oxidative decarboxylation that results in a reduction of the 3-beta-hydroxy group at the C-3 carbon to an oxo group, and ERG27 is responsible for the reduction of the keto group on the C-3. ERG28 has a role as a scaffold to help anchor ERG25, ERG26 and ERG27 to the endoplasmic reticulum and ERG29 regulates the activity of the iron-containing C4-methylsterol oxidase ERG25. Then, the sterol 24-C-methyltransferase ERG6 catalyzes the methyl transfer from S-adenosyl-methionine to the C-24 of zymosterol to form fecosterol. The C-8 sterol isomerase ERG2 catalyzes the reaction which results in unsaturation at C-7 in the B ring of sterols and thus converts fecosterol to episterol. The sterol-C5-desaturase ERG3 then catalyzes the introduction of a C-5 double bond in the B ring to produce 5-dehydroepisterol. The C-22 sterol desaturase ERG5 further converts 5-dehydroepisterol into ergosta-5,7,22,24(28)-tetraen-3beta-ol by forming the C-22(23) double bond in the sterol side chain. Finally, ergosta-5,7,22,24(28)-tetraen-3beta-ol is substrate of the C-24(28) sterol reductase ERG4 to produce ergosterol. The sequence is that of Sterol 24-C-methyltransferase from Candida albicans (strain SC5314 / ATCC MYA-2876) (Yeast).